Consider the following 146-residue polypeptide: Phospholipase A2 OS2 (146 aa).

An N-terminal signal peptide occupies residues 1–27; sequence MHPAHLLVLLAVCVSLLGASDIPPLPL. 7 disulfide bridges follow: C38–C99, C54–C145, C56–C72, C71–C126, C78–C119, C88–C112, and C106–C117. The Ca(2+) site is built by Y55, G57, and G59. H75 is an active-site residue. D76 provides a ligand contact to Ca(2+). D120 is an active-site residue.

Belongs to the phospholipase A2 family. Group I subfamily. D49 sub-subfamily. In terms of assembly, monomer. It depends on Ca(2+) as a cofactor. As to expression, expressed by the venom gland.

The protein resides in the secreted. It carries out the reaction a 1,2-diacyl-sn-glycero-3-phosphocholine + H2O = a 1-acyl-sn-glycero-3-phosphocholine + a fatty acid + H(+). Its function is as follows. Snake venom phospholipase A2 (PLA2) that shows high presynaptic neurotoxicity in vertebrata that is independent of catalytic activity, as well as local myotoxicity when intramuscularly injected into mice. Blocks acetylcholine release in Aplysia neurons, and potentiates pro-inflammatory cellular signaling. Potentiates glutamate excitoxicity when coinjected into brain of rats. May act by binding in a calcium-dependent fashion and with high affinity to a neuronal-type (N-type) PLA2 receptor, and with very high affinity to a muscle-type (M-type) PLA2 receptor. In vitro, shows a high-specific activity on E.coli membranes and is more efficient on the anionic phospholipid POPG than on the anionic phospholipid POPS or the zwitterionic phospholipid POPC. Exerts catalytically-independent anti-HIV (IC(50) is 35 nM) activity and catalytically-dependent antimalarial activity (IC(50) is 3.1 nM when tested on P.falciparum grown in serum that contains lipoproteins). PLA2 catalyzes the calcium-dependent hydrolysis of the 2-acyl groups in 3-sn-phosphoglycerides. The chain is Phospholipase A2 OS2 from Oxyuranus scutellatus scutellatus (Australian taipan).